The primary structure comprises 361 residues: MSGAAKRVVVGMSGGVDSSVTAWLLKQQGYEVIGLFMKNWEDDDDSEYCSTRQDWLDVVSVADLIGVDVEAVNFAAEYKDRVFADFLREYSAGRTPNPDVLCNAEIKFKAFLDHAMSLGAETIATGHYARVRQNAAGRFELLKALDHTKDQSYFLHRLNQAQLSRTLFPLGEIPKTRVREIAAEIGLPNAKKKDSTGICFIGERPFRDFLNRYLPTKPGPMKTPEGKVVGEHIGLAFYTLGQRKGIGLGGSRDGNGDAWYVARKDMANNTLYVVQGHDHPWLLTPVLNASDLSWVAGEPPAAGAAMAAKTRYRQSDAACTVQAVDADALSLGFAEPQWAVTPGQSAVLYDGDICLGGGIIQ.

ATP contacts are provided by residues 11–18 (GMSGGVDS) and M37. The tract at residues 97–99 (NPD) is interaction with target base in tRNA. The active-site Nucleophile is C102. The cysteines at positions 102 and 199 are disulfide-linked. G126 serves as a coordination point for ATP. Positions 149–151 (KDQ) are interaction with tRNA. C199 functions as the Cysteine persulfide intermediate in the catalytic mechanism. The segment at 311 to 312 (RY) is interaction with tRNA.

Belongs to the MnmA/TRMU family.

It localises to the cytoplasm. The catalysed reaction is S-sulfanyl-L-cysteinyl-[protein] + uridine(34) in tRNA + AH2 + ATP = 2-thiouridine(34) in tRNA + L-cysteinyl-[protein] + A + AMP + diphosphate + H(+). Catalyzes the 2-thiolation of uridine at the wobble position (U34) of tRNA, leading to the formation of s(2)U34. The protein is tRNA-specific 2-thiouridylase MnmA of Cupriavidus taiwanensis (strain DSM 17343 / BCRC 17206 / CCUG 44338 / CIP 107171 / LMG 19424 / R1) (Ralstonia taiwanensis (strain LMG 19424)).